We begin with the raw amino-acid sequence, 88 residues long: Small ribosomal subunit protein uS15 (88 aa).

This sequence belongs to the universal ribosomal protein uS15 family. In terms of assembly, part of the 30S ribosomal subunit. Forms a bridge to the 50S subunit in the 70S ribosome, contacting the 23S rRNA.

Functionally, one of the primary rRNA binding proteins, it binds directly to 16S rRNA where it helps nucleate assembly of the platform of the 30S subunit by binding and bridging several RNA helices of the 16S rRNA. In terms of biological role, forms an intersubunit bridge (bridge B4) with the 23S rRNA of the 50S subunit in the ribosome. The polypeptide is Small ribosomal subunit protein uS15 (Verminephrobacter eiseniae (strain EF01-2)).